A 373-amino-acid polypeptide reads, in one-letter code: Beta sliding clamp (373 aa).

The protein belongs to the beta sliding clamp family. In terms of assembly, forms a ring-shaped head-to-tail homodimer around DNA which binds and tethers DNA polymerases and other proteins to the DNA. The DNA replisome complex has a single clamp-loading complex (3 tau and 1 each of delta, delta', psi and chi subunits) which binds 3 Pol III cores (1 core on the leading strand and 2 on the lagging strand) each with a beta sliding clamp dimer. Additional proteins in the replisome are other copies of gamma, psi and chi, Ssb, DNA helicase and RNA primase.

It is found in the cytoplasm. Its function is as follows. Confers DNA tethering and processivity to DNA polymerases and other proteins. Acts as a clamp, forming a ring around DNA (a reaction catalyzed by the clamp-loading complex) which diffuses in an ATP-independent manner freely and bidirectionally along dsDNA. Initially characterized for its ability to contact the catalytic subunit of DNA polymerase III (Pol III), a complex, multichain enzyme responsible for most of the replicative synthesis in bacteria; Pol III exhibits 3'-5' exonuclease proofreading activity. The beta chain is required for initiation of replication as well as for processivity of DNA replication. The protein is Beta sliding clamp (dnaN) of Mycoplasmopsis pulmonis (strain UAB CTIP) (Mycoplasma pulmonis).